The primary structure comprises 295 residues: Very long chain fatty acid elongase 5 (295 aa).

The next 7 helical transmembrane spans lie at 26–46, 64–84, 112–132, 150–170, 175–192, 207–223, and 227–247; these read WLLL…LFIV, ILVV…YELV, VLWW…FFIL, MLNI…YFGA, FIHV…IPAM, LTQF…AMIW, and FPMG…ILFG. A disordered region spans residues 265-295; that stretch reads YQNGSASAVNGHTNSFSSLEDNVKQRKQRQD. Polar residues predominate over residues 266–284; the sequence is QNGSASAVNGHTNSFSSLE. The span at 285–295 shows a compositional bias: basic and acidic residues; sequence DNVKQRKQRQD.

It belongs to the ELO family. ELOVL5 subfamily.

The protein resides in the endoplasmic reticulum membrane. Its subcellular location is the cell projection. The protein localises to the dendrite. The enzyme catalyses a very-long-chain acyl-CoA + malonyl-CoA + H(+) = a very-long-chain 3-oxoacyl-CoA + CO2 + CoA. It carries out the reaction (6Z,9Z,12Z)-octadecatrienoyl-CoA + malonyl-CoA + H(+) = (8Z,11Z,14Z)-3-oxoeicosatrienoyl-CoA + CO2 + CoA. The catalysed reaction is (9Z,12Z,15Z)-octadecatrienoyl-CoA + malonyl-CoA + H(+) = (11Z,14Z,17Z)-3-oxoeicosatrienoyl-CoA + CO2 + CoA. It catalyses the reaction (9Z)-hexadecenoyl-CoA + malonyl-CoA + H(+) = 3-oxo-(11Z)-octadecenoyl-CoA + CO2 + CoA. The enzyme catalyses (9Z)-octadecenoyl-CoA + malonyl-CoA + H(+) = 3-oxo-(11Z)-eicosenoyl-CoA + CO2 + CoA. It carries out the reaction (11Z)-octadecenoyl-CoA + malonyl-CoA + H(+) = 3-oxo-(13Z)-eicosenoyl-CoA + CO2 + CoA. The catalysed reaction is (9Z,12Z)-octadecadienoyl-CoA + malonyl-CoA + H(+) = (11Z,14Z)-3-oxoicosa-11,14-dienoyl-CoA + CO2 + CoA. It catalyses the reaction (6Z,9Z,12Z,15Z)-octadecatetraenoyl-CoA + malonyl-CoA + H(+) = (8Z,11Z,14Z,17Z)-3-oxoicosatetraenoyl-CoA + CO2 + CoA. The enzyme catalyses (5Z,8Z,11Z,14Z)-eicosatetraenoyl-CoA + malonyl-CoA + H(+) = (7Z,10Z,13Z,16Z)-3-oxodocosatetraenoyl-CoA + CO2 + CoA. It carries out the reaction (5Z,8Z,11Z,14Z,17Z)-eicosapentaenoyl-CoA + malonyl-CoA + H(+) = 3-oxo-(7Z,10Z,13Z,16Z,19Z)-docosapentaenoyl-CoA + CO2 + CoA. It participates in lipid metabolism; polyunsaturated fatty acid biosynthesis. In terms of biological role, catalyzes the first and rate-limiting reaction of the four reactions that constitute the long-chain fatty acids elongation cycle. This endoplasmic reticulum-bound enzymatic process allows the addition of 2 carbons to the chain of long- and very long-chain fatty acids (VLCFAs) per cycle. Condensing enzyme that acts specifically toward polyunsaturated acyl-CoA with the higher activity toward C18:3(n-6) acyl-CoA. May participate in the production of monounsaturated and of polyunsaturated VLCFAs of different chain lengths that are involved in multiple biological processes as precursors of membrane lipids and lipid mediators. In conditions where the essential linoleic and alpha linoleic fatty acids are lacking it is also involved in the synthesis of Mead acid from oleic acid. This Xenopus tropicalis (Western clawed frog) protein is Very long chain fatty acid elongase 5.